A 678-amino-acid polypeptide reads, in one-letter code: DNA ligase (678 aa).

Residues 36–40, 85–86, and Glu-117 contribute to the NAD(+) site; these read DVVYD and SL. The N6-AMP-lysine intermediate role is filled by Lys-119. Arg-140, Glu-177, Lys-294, and Lys-318 together coordinate NAD(+). The Zn(2+) site is built by Cys-412, Cys-415, Cys-430, and Cys-435. The 81-residue stretch at 598 to 678 folds into the BRCT domain; the sequence is ISSTPLAGKT…QLLKMINPQE (81 aa).

This sequence belongs to the NAD-dependent DNA ligase family. LigA subfamily. Mg(2+) is required as a cofactor. It depends on Mn(2+) as a cofactor.

It carries out the reaction NAD(+) + (deoxyribonucleotide)n-3'-hydroxyl + 5'-phospho-(deoxyribonucleotide)m = (deoxyribonucleotide)n+m + AMP + beta-nicotinamide D-nucleotide.. Functionally, DNA ligase that catalyzes the formation of phosphodiester linkages between 5'-phosphoryl and 3'-hydroxyl groups in double-stranded DNA using NAD as a coenzyme and as the energy source for the reaction. It is essential for DNA replication and repair of damaged DNA. The protein is DNA ligase of Gloeothece citriformis (strain PCC 7424) (Cyanothece sp. (strain PCC 7424)).